Reading from the N-terminus, the 277-residue chain is Bis(5'-nucleosyl)-tetraphosphatase, symmetrical (277 aa).

This sequence belongs to the Ap4A hydrolase family.

The catalysed reaction is P(1),P(4)-bis(5'-adenosyl) tetraphosphate + H2O = 2 ADP + 2 H(+). In terms of biological role, hydrolyzes diadenosine 5',5'''-P1,P4-tetraphosphate to yield ADP. In Methylobacillus flagellatus (strain ATCC 51484 / DSM 6875 / VKM B-1610 / KT), this protein is Bis(5'-nucleosyl)-tetraphosphatase, symmetrical.